We begin with the raw amino-acid sequence, 384 residues long: Galactokinase (384 aa).

34 to 37 (EHTD) provides a ligand contact to substrate. Position 123 to 129 (123 to 129 (SSGLSSS)) interacts with ATP. Residues serine 129 and glutamate 161 each contribute to the Mg(2+) site. The Proton acceptor role is filled by aspartate 173. A substrate-binding site is contributed by tyrosine 222.

Belongs to the GHMP kinase family. GalK subfamily.

The protein resides in the cytoplasm. It catalyses the reaction alpha-D-galactose + ATP = alpha-D-galactose 1-phosphate + ADP + H(+). The protein operates within carbohydrate metabolism; galactose metabolism. Catalyzes the transfer of the gamma-phosphate of ATP to D-galactose to form alpha-D-galactose-1-phosphate (Gal-1-P). The protein is Galactokinase of Glaesserella parasuis serovar 5 (strain SH0165) (Haemophilus parasuis).